A 178-amino-acid polypeptide reads, in one-letter code: Large ribosomal subunit protein uL6 (178 aa).

It belongs to the universal ribosomal protein uL6 family. Part of the 50S ribosomal subunit.

This protein binds to the 23S rRNA, and is important in its secondary structure. It is located near the subunit interface in the base of the L7/L12 stalk, and near the tRNA binding site of the peptidyltransferase center. The sequence is that of Large ribosomal subunit protein uL6 from Streptococcus thermophilus (strain CNRZ 1066).